Reading from the N-terminus, the 153-residue chain is Small ribosomal subunit protein uS12m (153 aa).

The N-terminal 20 residues, 1-20 (MLSRFMSNTWCTPLRQAQRL), are a transit peptide targeting the mitochondrion.

This sequence belongs to the universal ribosomal protein uS12 family. In terms of assembly, component of the mitochondrial small ribosomal subunit (mt-SSU). Mature yeast 74S mitochondrial ribosomes consist of a small (37S) and a large (54S) subunit. The 37S small subunit contains a 15S ribosomal RNA (15S mt-rRNA) and 34 different proteins. The 54S large subunit contains a 21S rRNA (21S mt-rRNA) and 46 different proteins. uS12m forms part of the decoding center of the mt-SSU.

The protein localises to the mitochondrion. In terms of biological role, component of the mitochondrial ribosome (mitoribosome), a dedicated translation machinery responsible for the synthesis of mitochondrial genome-encoded proteins, including at least some of the essential transmembrane subunits of the mitochondrial respiratory chain. The mitoribosomes are attached to the mitochondrial inner membrane and translation products are cotranslationally integrated into the membrane. uS12m is required for respiratory growth. The protein is Small ribosomal subunit protein uS12m (MRPS12) of Saccharomyces cerevisiae (strain ATCC 204508 / S288c) (Baker's yeast).